Reading from the N-terminus, the 80-residue chain is Exodeoxyribonuclease 7 small subunit (80 aa).

Belongs to the XseB family. Heterooligomer composed of large and small subunits.

It is found in the cytoplasm. The catalysed reaction is Exonucleolytic cleavage in either 5'- to 3'- or 3'- to 5'-direction to yield nucleoside 5'-phosphates.. Its function is as follows. Bidirectionally degrades single-stranded DNA into large acid-insoluble oligonucleotides, which are then degraded further into small acid-soluble oligonucleotides. This Rickettsia akari (strain Hartford) protein is Exodeoxyribonuclease 7 small subunit.